Consider the following 292-residue polypeptide: tRNA pseudouridine synthase B (292 aa).

Residue D38 is the Nucleophile of the active site.

The protein belongs to the pseudouridine synthase TruB family. Type 1 subfamily.

The catalysed reaction is uridine(55) in tRNA = pseudouridine(55) in tRNA. Functionally, responsible for synthesis of pseudouridine from uracil-55 in the psi GC loop of transfer RNAs. The protein is tRNA pseudouridine synthase B of Streptococcus pneumoniae serotype 2 (strain D39 / NCTC 7466).